The primary structure comprises 73 residues: Protein kish (73 aa).

An N-terminal signal peptide occupies residues 1–21 (MTAIFNFESLLFVILLTICTC). Residues 22–52 (TYLHRQFPALLEKRKEGVTMVFWKCARIGER) lie on the Lumenal side of the membrane. Residues 53–73 (ASPYISLFCVFMALRFIFGSS) form a helical membrane-spanning segment.

This sequence belongs to the KISH family.

It is found in the golgi apparatus membrane. The protein resides in the endoplasmic reticulum membrane. Functionally, involved in the early part of the secretory pathway. In Schizosaccharomyces pombe (strain 972 / ATCC 24843) (Fission yeast), this protein is Protein kish (ksh1).